We begin with the raw amino-acid sequence, 180 residues long: Transcription factor IBH1-like 1 (180 aa).

The bHLH domain occupies 110–160 (KSKSASEEAAAKAKRLVKRRTQGLRNVVPGGELMSNDVLLLQETLDYIVSL).

The protein belongs to the bHLH protein family.

It localises to the nucleus. Its function is as follows. Functions redundandly with IBH1/BHLH158 in a regulation node known as the incoherent feed-forward loop (FFL). Acts as transcriptional repressor that negatively regulates cell and organ elongation in response to gibberellin (GA) and brassinosteroid (BR) signaling. The protein is Transcription factor IBH1-like 1 of Arabidopsis thaliana (Mouse-ear cress).